We begin with the raw amino-acid sequence, 275 residues long: 4-diphosphocytidyl-2-C-methyl-D-erythritol kinase (275 aa).

Residue lysine 14 is part of the active site. 94–104 lines the ATP pocket; the sequence is PMEAGLGGGSA. Aspartate 134 is a catalytic residue.

The protein belongs to the GHMP kinase family. IspE subfamily.

It carries out the reaction 4-CDP-2-C-methyl-D-erythritol + ATP = 4-CDP-2-C-methyl-D-erythritol 2-phosphate + ADP + H(+). It participates in isoprenoid biosynthesis; isopentenyl diphosphate biosynthesis via DXP pathway; isopentenyl diphosphate from 1-deoxy-D-xylulose 5-phosphate: step 3/6. In terms of biological role, catalyzes the phosphorylation of the position 2 hydroxy group of 4-diphosphocytidyl-2C-methyl-D-erythritol. The chain is 4-diphosphocytidyl-2-C-methyl-D-erythritol kinase from Thermosipho africanus (strain TCF52B).